We begin with the raw amino-acid sequence, 912 residues long: MCRIAGTPPRILPPLALMLLAALQQAPIKATCEDMLCKMGFPEDVHSAVVSRSVHGGQPLLNVRFQSCDENRKIYFGSSEPEDFRVGEDGVVYAERSFQLSAEPTEFVVSARDKETQEEWQMKVKLTPEPAFTGASEKDQKKIEDIIFPWQQYKDSSHLKRQKRDWVIPPINLPENSRGPFPQELVRIRSDRDKSLSLRYSVTGPGADQPPTGIFIINPISGQLSVTKPLDREQIASFHLRAHAVDVNGNQVENPIDIVINVIDMNDNRPEFLHQVWNGTVPEGSKPGTYVMTVTAIDADDPNAQNGMLRYRILSQAPSSPSPNMFTINNETGDIITVAAGLDREKVQQYTLIIQATDMEGNPTYGLSNTATAVITVTDVNDNPPEFTAMTFYGEVPENRVDVIVANLTVTDKDQPHTPAWNARYQMTGGDPTGQFTILTDPNSNDGLVTVVKPIDFETNRMFVLTVAAENQVPLAKGIQHPPQSTATVSITVIDVNESPYFVPNPKLVRQEEGLLAGSMLTTFTARDPDRYMQQTSLRYSKLSDPANWLKIDPVNGQITTTAVLDRESIYVQNNMYNATFLASDNGIPPMSGTGTLQIYLLDINDNAPQVNPKEATTCETLQPNAINITAVDPDIDPNAGPFAFELPDSPPSIKRNWTIVRISGDHAQLSLRIRFLEAGIYDVPIVITDSGNPHASSTSVLKVKVCQCDINGDCTDVDRIVGAGLGTGAIIAILLCIIILLILVLMFVVWMKRRDKERQAKQLLIDPEDDVRDNILKYDEEGGGEEDQDYDLSQLQQPDTVEPDAIKPVGIRRLDERPIHAEPQYPVRSAAPHPGDIGDFINEGLKAADNDPTAPPYDSLLVFDYEGSGSTAGSLSSLNSSSSGGEQDYDYLNDWGPRFKKLADMYGGGDD.

The signal sequence occupies residues 1-28; that stretch reads MCRIAGTPPRILPPLALMLLAALQQAPI. The propeptide occupies 29 to 164; that stretch reads KATCEDMLCK…DSSHLKRQKR (136 aa). 5 consecutive Cadherin domains span residues 165-272, 273-387, 388-502, 503-609, and 610-720; these read DWVI…RPEF, LHQV…PPEF, TAMT…SPYF, VPNP…DNAP, and QVNP…DVDR. Residues 165-729 are Extracellular-facing; that stretch reads DWVIPPINLP…RIVGAGLGTG (565 aa). Glu175, Asp231, Glu233, Asp264, Met265, Asn266, Asp267, and Asn268 together coordinate Ca(2+). The N-linked (GlcNAc...) asparagine glycan is linked to Asn278. Residues Asp298, Asp300, and Asn306 each coordinate Ca(2+). The N-linked (GlcNAc...) asparagine glycan is linked to Asn330. Asp358 is a binding site for Ca(2+). N-linked (GlcNAc...) asparagine glycosylation is found at Asn407, Asn578, Asn628, and Asn657. Residues 730-752 form a helical membrane-spanning segment; the sequence is AIIAILLCIIILLILVLMFVVWM. The Cytoplasmic portion of the chain corresponds to 753-912; it reads KRRDKERQAK…LADMYGGGDD (160 aa). Residues 869-886 show a composition bias toward low complexity; the sequence is SGSTAGSLSSLNSSSSGG. The segment at 869–890 is disordered; that stretch reads SGSTAGSLSSLNSSSSGGEQDY.

As to quaternary structure, homodimer (via extracellular region). Can also form heterodimers with other cadherins (via extracellular region). Dimerization occurs in trans, i.e. with a cadherin chain from another cell. Interacts with CTNNA2. Expressed at intercalated disks in the heart (at protein level).

Its subcellular location is the cell membrane. It localises to the sarcolemma. The protein resides in the cell junction. It is found in the cell surface. The protein localises to the desmosome. Its subcellular location is the adherens junction. In terms of biological role, calcium-dependent cell adhesion protein; preferentially mediates homotypic cell-cell adhesion. Cadherins may thus contribute to the sorting of heterogeneous cell types, and thereby play an important role during embryonic development. Required for proper neurite branching, and pre- and postsynaptic organization. The sequence is that of Cadherin-2 (CDH2) from Gallus gallus (Chicken).